Here is a 523-residue protein sequence, read N- to C-terminus: Sensory neuron membrane protein 1 (523 aa).

The Cytoplasmic portion of the chain corresponds to 1-11; that stretch reads MQLPRELKYAA. A helical membrane pass occupies residues 12–32; that stretch reads IAGGVALFGLIFGWVLFPTIL. Residues 33–458 lie on the Extracellular side of the membrane; it reads KSQLKKEMAL…HQLFIPKRVV (426 aa). N-linked (GlcNAc...) asparagine glycosylation occurs at N229. Disulfide bonds link C268-C333, C297-C352, and C335-C341. N-linked (GlcNAc...) asparagine glycosylation occurs at N440. The chain crosses the membrane as a helical span at residues 459-479; that stretch reads GVLRWWMVSFGSLGAVIGIVF. Topologically, residues 480–523 are cytoplasmic; sequence HFRDHIMRLAVSGDTKVSKVIPEVEEQKDISVIGQAQEPAKVNI.

Belongs to the CD36 family.

It localises to the cell membrane. In terms of biological role, plays an olfactory role that is not restricted to pheromone sensitivity. The chain is Sensory neuron membrane protein 1 from Helicoverpa assulta (Oriental tobacco budworm).